Consider the following 66-residue polypeptide: Large ribosomal subunit protein bL35c (66 aa).

The protein belongs to the bacterial ribosomal protein bL35 family.

The protein localises to the plastid. It is found in the chloroplast. This is Large ribosomal subunit protein bL35c from Guillardia theta (Cryptophyte).